Consider the following 445-residue polypeptide: Probable histidine--tRNA ligase, cytoplasmic (445 aa).

It belongs to the class-II aminoacyl-tRNA synthetase family.

It is found in the cytoplasm. The catalysed reaction is tRNA(His) + L-histidine + ATP = L-histidyl-tRNA(His) + AMP + diphosphate + H(+). This Antonospora locustae (Microsporidian parasite) protein is Probable histidine--tRNA ligase, cytoplasmic.